The primary structure comprises 261 residues: Antiviral protein S (261 aa).

Intrachain disulfides connect Cys-34-Cys-258 and Cys-84-Cys-105. Glu-175 is a catalytic residue.

It belongs to the ribosome-inactivating protein family. Type 1 RIP subfamily.

The catalysed reaction is Endohydrolysis of the N-glycosidic bond at one specific adenosine on the 28S rRNA.. Inhibits viral infection of plants, and protein synthesis in vitro. This chain is Antiviral protein S, found in Phytolacca americana (American pokeweed).